Here is a 306-residue protein sequence, read N- to C-terminus: Palmitoyl-protein thioesterase ABHD10, mitochondrial (306 aa).

The transit peptide at 1-52 (MAVARLAAVAAWVPCRSWGWAAVPFGPHRGLSVLLARIPQRAPRWLPACRQK) directs the protein to the mitochondrion. The 101-residue stretch at 78-178 (IIFIPGYLSY…VVALIGVATA (101 aa)) folds into the AB hydrolase-1 domain. Active-site charge relay system residues include Ser152, Asp249, and His279.

It belongs to the AB hydrolase superfamily.

Its subcellular location is the mitochondrion. It catalyses the reaction S-hexadecanoyl-L-cysteinyl-[protein] + H2O = L-cysteinyl-[protein] + hexadecanoate + H(+). The enzyme catalyses mycophenolic acid O-acyl-beta-D-glucuronide + H2O = mycophenolate + D-glucuronate + H(+). Inhibited by palmostatin-B. In terms of biological role, acts as an acyl-protein thioesterase that hydrolyzes fatty acids from acylated residues in proteins. Regulates the mitochondrial S-depalmitoylation of the nucleophilic active site residue of peroxiredoxin-5/PRDX5, a key antioxidant protein, therefore modulating mitochondrial antioxidant ability. Also catalyzes the deglucuronidation of mycophenolic acid acyl-glucuronide, an active metabolite of the immunosuppressant drug mycophenolate. This is Palmitoyl-protein thioesterase ABHD10, mitochondrial from Homo sapiens (Human).